Consider the following 476-residue polypeptide: Protein DETOXIFICATION 17 (476 aa).

The next 12 membrane-spanning stretches (helical) occupy residues 29-51 (LWLS…ISVM), 70-90 (FASV…ETLC), 111-131 (FVLL…EQIL), 140-160 (IASV…AYGL), 177-197 (VFVC…LFVL), 205-225 (GAAL…SCYV), 252-272 (IAFP…LLVL), 286-306 (VLSI…GLGG), 326-346 (LAVY…VTVL), 363-383 (IIAY…LDGL), 405-425 (LGSY…HFHI), and 431-451 (WLGI…VTIF).

It belongs to the multi antimicrobial extrusion (MATE) (TC 2.A.66.1) family.

It is found in the membrane. In Arabidopsis thaliana (Mouse-ear cress), this protein is Protein DETOXIFICATION 17.